The following is a 220-amino-acid chain: Small ribosomal subunit protein eS1 (220 aa).

It belongs to the eukaryotic ribosomal protein eS1 family.

The protein is Small ribosomal subunit protein eS1 of Pyrobaculum arsenaticum (strain DSM 13514 / JCM 11321 / PZ6).